We begin with the raw amino-acid sequence, 645 residues long: DNA mismatch repair protein MutL (645 aa).

The disordered stretch occupies residues 371-403 (VHDQKDKNHDVESHKNNLDSTSSTNNESTEVSN). Over residues 372-387 (HDQKDKNHDVESHKNN) the composition is skewed to basic and acidic residues. The span at 390 to 402 (STSSTNNESTEVS) shows a compositional bias: low complexity.

It belongs to the DNA mismatch repair MutL/HexB family.

In terms of biological role, this protein is involved in the repair of mismatches in DNA. It is required for dam-dependent methyl-directed DNA mismatch repair. May act as a 'molecular matchmaker', a protein that promotes the formation of a stable complex between two or more DNA-binding proteins in an ATP-dependent manner without itself being part of a final effector complex. The polypeptide is DNA mismatch repair protein MutL (Staphylococcus epidermidis (strain ATCC 35984 / DSM 28319 / BCRC 17069 / CCUG 31568 / BM 3577 / RP62A)).